We begin with the raw amino-acid sequence, 403 residues long: MDKQLNDAPCGFLALSEEGSIIAANRTLIKILDYEPEQVIGQHMNMMLTIPAQLFCQLYFFPLLKLEHHIEEIYISLKARDGEEIPVLINAIARHDSGASVFDCVLIPMRKRNEYENELLIARNEAQEALLAKQKANAELEIALETLKAKQEELLEINKQNQQFKLNTKRELELARKIQKNSLTEPIVNDQVQIDSYYNASSELSGDLYGYYQIDEHRYGIIILDVMGHGISSALITMSLHPLFQRQITQGLSPVKVMKELDRHLHSLFQNDEEARHYCTAIYLEIDIARQRIDYVNAGHPPALWQDDSGTQHLLHATSPPIGMFEDLEFQSSSLSYTEDGRLLLYTDGVMDPTASCYLFDLLKDHPDSPIADLKEKILTSLQHQKEAHHKSDDECFILVDVK.

The PAS domain maps to 1–42 (MDKQLNDAPCGFLALSEEGSIIAANRTLIKILDYEPEQVIGQ). A PPM-type phosphatase domain is found at 191-402 (QVQIDSYYNA…DDECFILVDV (212 aa)).

Requires Mn(2+) as cofactor.

It carries out the reaction O-phospho-L-serine + H2O = L-serine + phosphate. It catalyses the reaction O-phospho-D-serine + H2O = D-serine + phosphate. Positive regulator of sigma-B activity. Dephosphorylates RsbV in response to energy stress. In Bacillus subtilis (strain 168), this protein is Phosphoserine phosphatase RsbP (rsbP).